Here is a 319-residue protein sequence, read N- to C-terminus: Acetyl-coenzyme A carboxylase carboxyl transferase subunit alpha (319 aa).

The CoA carboxyltransferase C-terminal domain occupies 31-292 (EIDSAIRSLR…KTYLSRQLSE (262 aa)).

Belongs to the AccA family. As to quaternary structure, acetyl-CoA carboxylase is a heterohexamer composed of biotin carboxyl carrier protein (AccB), biotin carboxylase (AccC) and two subunits each of ACCase subunit alpha (AccA) and ACCase subunit beta (AccD).

It localises to the cytoplasm. It carries out the reaction N(6)-carboxybiotinyl-L-lysyl-[protein] + acetyl-CoA = N(6)-biotinyl-L-lysyl-[protein] + malonyl-CoA. It participates in lipid metabolism; malonyl-CoA biosynthesis; malonyl-CoA from acetyl-CoA: step 1/1. In terms of biological role, component of the acetyl coenzyme A carboxylase (ACC) complex. First, biotin carboxylase catalyzes the carboxylation of biotin on its carrier protein (BCCP) and then the CO(2) group is transferred by the carboxyltransferase to acetyl-CoA to form malonyl-CoA. In Rhodopirellula baltica (strain DSM 10527 / NCIMB 13988 / SH1), this protein is Acetyl-coenzyme A carboxylase carboxyl transferase subunit alpha.